Here is a 190-residue protein sequence, read N- to C-terminus: MAKSIVLYGGQFNPIHIAHMVVASEVNAFIKPDVFYFIPSFISPLKEHTDYLEGRYRVDMIQSVIDDLGFGRICLNEIERRGQSYTYDTVMYILDKHPDAKLYLVIGTDQYNQLHKWFKINELKSYITFVIVNRDKTTQEVESEMLSITIPRIDISSTLIRKRVKNKENIQALVSPSVEQYIREEGLYES.

This sequence belongs to the NadD family.

The enzyme catalyses nicotinate beta-D-ribonucleotide + ATP + H(+) = deamido-NAD(+) + diphosphate. It participates in cofactor biosynthesis; NAD(+) biosynthesis; deamido-NAD(+) from nicotinate D-ribonucleotide: step 1/1. Its function is as follows. Catalyzes the reversible adenylation of nicotinate mononucleotide (NaMN) to nicotinic acid adenine dinucleotide (NaAD). This chain is Probable nicotinate-nucleotide adenylyltransferase, found in Staphylococcus saprophyticus subsp. saprophyticus (strain ATCC 15305 / DSM 20229 / NCIMB 8711 / NCTC 7292 / S-41).